Reading from the N-terminus, the 207-residue chain is Large ribosomal subunit protein uL4 (207 aa).

The interval 44-81 is disordered; the sequence is KRQGTQSAKTRSEVRGGGRKPWRQKGTGRARQGSIRSP. Basic residues predominate over residues 60 to 71; the sequence is GGRKPWRQKGTG.

Belongs to the universal ribosomal protein uL4 family. As to quaternary structure, part of the 50S ribosomal subunit.

Its function is as follows. One of the primary rRNA binding proteins, this protein initially binds near the 5'-end of the 23S rRNA. It is important during the early stages of 50S assembly. It makes multiple contacts with different domains of the 23S rRNA in the assembled 50S subunit and ribosome. Forms part of the polypeptide exit tunnel. The sequence is that of Large ribosomal subunit protein uL4 from Finegoldia magna (strain ATCC 29328 / DSM 20472 / WAL 2508) (Peptostreptococcus magnus).